The primary structure comprises 193 residues: ATP-dependent Clp protease proteolytic subunit (193 aa).

Ser98 functions as the Nucleophile in the catalytic mechanism. The active site involves His123.

The protein belongs to the peptidase S14 family. Fourteen ClpP subunits assemble into 2 heptameric rings which stack back to back to give a disk-like structure with a central cavity, resembling the structure of eukaryotic proteasomes.

It is found in the cytoplasm. The catalysed reaction is Hydrolysis of proteins to small peptides in the presence of ATP and magnesium. alpha-casein is the usual test substrate. In the absence of ATP, only oligopeptides shorter than five residues are hydrolyzed (such as succinyl-Leu-Tyr-|-NHMec, and Leu-Tyr-Leu-|-Tyr-Trp, in which cleavage of the -Tyr-|-Leu- and -Tyr-|-Trp bonds also occurs).. Its function is as follows. Cleaves peptides in various proteins in a process that requires ATP hydrolysis. Has a chymotrypsin-like activity. Plays a major role in the degradation of misfolded proteins. This is ATP-dependent Clp protease proteolytic subunit from Haemophilus influenzae (strain PittEE).